The sequence spans 785 residues: MASAAPINLRAQDTPYVPPTSLPTSSSQTGSTARIQIIDDEKKFTPDLATQIERWGLRDAGFSYNIVAVFGSQSTGKSTLLNRLFGTTFDVMDETRRQQTTKGIWMCRGKDMGVMVMDVEGTDGRERGEDQDFERKSALFSLASSEILIVNLWEHQVGLYQGANMGLLKTVFEVNLGLFGKKAQDGSNGRTLLLFVIRDHIGQTPLANLQATLTADLNRIWESLSKPTDLKDRLLSDYFDLAFTALPHKILSADKFESEVQELRTRFVDKESSDYLFKPAYHKRIPADGVAFYMEGIWEQVQTNKDLDLPTQQELLAQFRCDEISAVALAEFNEQAKSQKRPVEGGRVVEGLGAMMNNWRTQALTRYDRDASRYHKGVYGRKRADLVAVLDSTLSPLFLGQLKNLHKSCLVTFKKEMLDGLHGEDYDFANVFKRAREKSERTFSEGGKEALVEGTDWSWEEELELLRDEIRAVADQCRKDETTKMINLIERNLKKHISEPVELHLGKASPDMWDEILRVFRDTLDKAEKTYLTKAKSFNCTEEENTAALDALRKRGWVALRAKIDEQTADPIILGKLRNHFEERFRYDEQGVPRVWKPDDDIDSAFMKAKDQTLDLVPLYSKISPKDTSLEFNLPSESNDSFSNDDFDLSTSPVIFTETKCLDLTNKFRRDADAYYVEAKRSTVASIAQIPYWIYGVLVVLGWNEAMLVLFNPLYFAFLLLAMATSYIIAQLGLVGPLFQVTRTVGSEIQRQATARLREHFSQPVLAEPVQVGPSRDREEVGQIQ.

The disordered stretch occupies residues 1–31 (MASAAPINLRAQDTPYVPPTSLPTSSSQTGS). Topologically, residues 1–689 (MASAAPINLR…KRSTVASIAQ (689 aa)) are cytoplasmic. Low complexity predominate over residues 22–31 (LPTSSSQTGS). Positions 61–281 (GFSYNIVAVF…SSDYLFKPAY (221 aa)) constitute a GB1/RHD3-type G domain. Residue 71–78 (GSQSTGKS) participates in GTP binding. Residues 458–482 (SWEEELELLRDEIRAVADQCRKDET) are a coiled coil. The helical transmembrane segment at 690–710 (IPYWIYGVLVVLGWNEAMLVL) threads the bilayer. Over 711–713 (FNP) the chain is Lumenal. Residues 714 to 734 (LYFAFLLLAMATSYIIAQLGL) form a helical membrane-spanning segment. Residues 735–785 (VGPLFQVTRTVGSEIQRQATARLREHFSQPVLAEPVQVGPSRDREEVGQIQ) are Cytoplasmic-facing.

It belongs to the TRAFAC class dynamin-like GTPase superfamily. GB1/RHD3 GTPase family. RHD3 subfamily.

The protein resides in the endoplasmic reticulum membrane. Cooperates with the reticulon proteins and tubule-shaping DP1 family proteins to generate and maintain the structure of the tubular endoplasmic reticulum network. Has GTPase activity, which is required for its function in ER organization. The chain is Protein SEY1 from Laccaria bicolor (strain S238N-H82 / ATCC MYA-4686) (Bicoloured deceiver).